The chain runs to 157 residues: Endoribonuclease YbeY (157 aa).

The Zn(2+) site is built by His113, His117, and His123.

It belongs to the endoribonuclease YbeY family. Zn(2+) is required as a cofactor.

The protein resides in the cytoplasm. Single strand-specific metallo-endoribonuclease involved in late-stage 70S ribosome quality control and in maturation of the 3' terminus of the 16S rRNA. This is Endoribonuclease YbeY from Ehrlichia ruminantium (strain Gardel).